The chain runs to 204 residues: Proteasome subunit beta type-3-A (204 aa).

This sequence belongs to the peptidase T1B family. As to quaternary structure, component of the 20S core complex of the 26S proteasome. The 26S proteasome is composed of a core protease (CP), known as the 20S proteasome, capped at one or both ends by the 19S regulatory particle (RP/PA700). The 20S proteasome core is composed of 28 subunits that are arranged in four stacked rings, resulting in a barrel-shaped structure. The two end rings are each formed by seven alpha subunits, and the two central rings are each formed by seven beta subunits. The catalytic chamber with the active sites is on the inside of the barrel.

The protein localises to the cytoplasm. It localises to the nucleus. In terms of biological role, non-catalytic component of the proteasome, a multicatalytic proteinase complex which is characterized by its ability to cleave peptides with Arg, Phe, Tyr, Leu, and Glu adjacent to the leaving group at neutral or slightly basic pH. The proteasome has an ATP-dependent proteolytic activity. In Arabidopsis thaliana (Mouse-ear cress), this protein is Proteasome subunit beta type-3-A (PBC1).